A 255-amino-acid polypeptide reads, in one-letter code: Hydroxyacylglutathione hydrolase (255 aa).

The Zn(2+) site is built by histidine 56, histidine 58, aspartate 60, histidine 61, histidine 114, aspartate 133, and histidine 171.

It belongs to the metallo-beta-lactamase superfamily. Glyoxalase II family. As to quaternary structure, monomer. The cofactor is Zn(2+).

It catalyses the reaction an S-(2-hydroxyacyl)glutathione + H2O = a 2-hydroxy carboxylate + glutathione + H(+). The protein operates within secondary metabolite metabolism; methylglyoxal degradation; (R)-lactate from methylglyoxal: step 2/2. Its function is as follows. Thiolesterase that catalyzes the hydrolysis of S-D-lactoyl-glutathione to form glutathione and D-lactic acid. In Cereibacter sphaeroides (strain ATCC 17025 / ATH 2.4.3) (Rhodobacter sphaeroides), this protein is Hydroxyacylglutathione hydrolase.